The sequence spans 420 residues: ATP phosphoribosyltransferase regulatory subunit (420 aa).

This sequence belongs to the class-II aminoacyl-tRNA synthetase family. HisZ subfamily. Heteromultimer composed of HisG and HisZ subunits.

It is found in the cytoplasm. Its pathway is amino-acid biosynthesis; L-histidine biosynthesis; L-histidine from 5-phospho-alpha-D-ribose 1-diphosphate: step 1/9. Functionally, required for the first step of histidine biosynthesis. May allow the feedback regulation of ATP phosphoribosyltransferase activity by histidine. The sequence is that of ATP phosphoribosyltransferase regulatory subunit from Bacillus cereus (strain ZK / E33L).